Here is a 492-residue protein sequence, read N- to C-terminus: Bifunctional protein GlmU (492 aa).

The interval 1–241 (MIPENTGPAA…RWQVEGANDR (241 aa)) is pyrophosphorylase. UDP-N-acetyl-alpha-D-glucosamine contacts are provided by residues 14-17 (LAAG), Lys28, Gln81, 86-87 (GT), 112-114 (YGD), Gly151, Glu166, Asn181, and Asn239. Asp114 serves as a coordination point for Mg(2+). Asn239 lines the Mg(2+) pocket. A linker region spans residues 242-262 (VQLAALGAELNRRTVEAWMRA). The tract at residues 263–492 (GVTVVDPSTT…STPASTEEGK (230 aa)) is N-acetyltransferase. Residues Arg344 and Lys362 each coordinate UDP-N-acetyl-alpha-D-glucosamine. The active-site Proton acceptor is the His374. Positions 377 and 388 each coordinate UDP-N-acetyl-alpha-D-glucosamine. Residues 397–398 (NY), Ser416, and Ala434 each bind acetyl-CoA. The disordered stretch occupies residues 460 to 492 (WVPANRPGSRSAELAQAAINNSSSTPASTEEGK). Polar residues predominate over residues 477–492 (AINNSSSTPASTEEGK).

It in the N-terminal section; belongs to the N-acetylglucosamine-1-phosphate uridyltransferase family. This sequence in the C-terminal section; belongs to the transferase hexapeptide repeat family. As to quaternary structure, homotrimer. The cofactor is Mg(2+).

The protein resides in the cytoplasm. It catalyses the reaction alpha-D-glucosamine 1-phosphate + acetyl-CoA = N-acetyl-alpha-D-glucosamine 1-phosphate + CoA + H(+). The catalysed reaction is N-acetyl-alpha-D-glucosamine 1-phosphate + UTP + H(+) = UDP-N-acetyl-alpha-D-glucosamine + diphosphate. It functions in the pathway nucleotide-sugar biosynthesis; UDP-N-acetyl-alpha-D-glucosamine biosynthesis; N-acetyl-alpha-D-glucosamine 1-phosphate from alpha-D-glucosamine 6-phosphate (route II): step 2/2. It participates in nucleotide-sugar biosynthesis; UDP-N-acetyl-alpha-D-glucosamine biosynthesis; UDP-N-acetyl-alpha-D-glucosamine from N-acetyl-alpha-D-glucosamine 1-phosphate: step 1/1. The protein operates within bacterial outer membrane biogenesis; LPS lipid A biosynthesis. Functionally, catalyzes the last two sequential reactions in the de novo biosynthetic pathway for UDP-N-acetylglucosamine (UDP-GlcNAc). The C-terminal domain catalyzes the transfer of acetyl group from acetyl coenzyme A to glucosamine-1-phosphate (GlcN-1-P) to produce N-acetylglucosamine-1-phosphate (GlcNAc-1-P), which is converted into UDP-GlcNAc by the transfer of uridine 5-monophosphate (from uridine 5-triphosphate), a reaction catalyzed by the N-terminal domain. The polypeptide is Bifunctional protein GlmU (Pseudarthrobacter chlorophenolicus (strain ATCC 700700 / DSM 12829 / CIP 107037 / JCM 12360 / KCTC 9906 / NCIMB 13794 / A6) (Arthrobacter chlorophenolicus)).